Here is a 317-residue protein sequence, read N- to C-terminus: N-acetyl-gamma-glutamyl-phosphate reductase (317 aa).

C136 is an active-site residue.

The protein belongs to the NAGSA dehydrogenase family. Type 1 subfamily.

It localises to the cytoplasm. The enzyme catalyses N-acetyl-L-glutamate 5-semialdehyde + phosphate + NADP(+) = N-acetyl-L-glutamyl 5-phosphate + NADPH + H(+). It functions in the pathway amino-acid biosynthesis; L-arginine biosynthesis; N(2)-acetyl-L-ornithine from L-glutamate: step 3/4. Its function is as follows. Catalyzes the NADPH-dependent reduction of N-acetyl-5-glutamyl phosphate to yield N-acetyl-L-glutamate 5-semialdehyde. The chain is N-acetyl-gamma-glutamyl-phosphate reductase from Stenotrophomonas maltophilia (strain R551-3).